Reading from the N-terminus, the 466-residue chain is Probable aminotransferase Rv3329 (466 aa).

The residue at position 294 (Lys-294) is an N6-(pyridoxal phosphate)lysine.

This sequence belongs to the class-III pyridoxal-phosphate-dependent aminotransferase family. Pyridoxal 5'-phosphate serves as cofactor.

Its function is as follows. Probable aminotransferase. The polypeptide is Probable aminotransferase Rv3329 (Mycobacterium tuberculosis (strain ATCC 25618 / H37Rv)).